Consider the following 217-residue polypeptide: Pyrrolidone-carboxylate peptidase (217 aa).

Residues glutamate 78, cysteine 141, and histidine 168 contribute to the active site.

Belongs to the peptidase C15 family. In terms of assembly, homotetramer.

Its subcellular location is the cytoplasm. The enzyme catalyses Release of an N-terminal pyroglutamyl group from a polypeptide, the second amino acid generally not being Pro.. In terms of biological role, removes 5-oxoproline from various penultimate amino acid residues except L-proline. In Treponema denticola (strain ATCC 35405 / DSM 14222 / CIP 103919 / JCM 8153 / KCTC 15104), this protein is Pyrrolidone-carboxylate peptidase.